Consider the following 320-residue polypeptide: Methylenetetrahydrofolate dehydrogenase [NAD(+)] (320 aa).

Cys-152 is an active-site residue. NAD(+)-binding positions include 187–188 (RS) and 210–211 (DI).

This sequence belongs to the tetrahydrofolate dehydrogenase/cyclohydrolase family. As to quaternary structure, homodimer.

The protein localises to the cytoplasm. It localises to the nucleus. The enzyme catalyses (6R)-5,10-methylene-5,6,7,8-tetrahydrofolate + NAD(+) = (6R)-5,10-methenyltetrahydrofolate + NADH. Its pathway is one-carbon metabolism; tetrahydrofolate interconversion. Functionally, catalyzes oxidation of cytoplasmic one-carbon units for purine biosynthesis. This is Methylenetetrahydrofolate dehydrogenase [NAD(+)] (mtd1) from Schizosaccharomyces pombe (strain 972 / ATCC 24843) (Fission yeast).